Here is a 382-residue protein sequence, read N- to C-terminus: Mannitol-1-phosphate 5-dehydrogenase (382 aa).

3 to 14 (ALHFGAGNIGRG) provides a ligand contact to NAD(+). Lys269 is subject to N6-acetyllysine.

This sequence belongs to the mannitol dehydrogenase family.

It catalyses the reaction D-mannitol 1-phosphate + NAD(+) = beta-D-fructose 6-phosphate + NADH + H(+). The protein is Mannitol-1-phosphate 5-dehydrogenase of Escherichia coli O139:H28 (strain E24377A / ETEC).